A 337-amino-acid chain; its full sequence is Terpene cyclase (337 aa).

A helical transmembrane segment spans residues 5 to 25 (ASVIFLSLSVLAAVGVWGPFV). Asn-65 carries an N-linked (GlcNAc...) asparagine glycan. 7 consecutive transmembrane segments (helical) span residues 72 to 92 (IAYC…VILC), 111 to 131 (GLLS…MSFI), 149 to 169 (ALIL…LNVL), 177 to 197 (IWGI…ARII), 222 to 242 (VAGG…LGIF), 267 to 287 (LQVD…HELI), and 298 to 318 (LGGL…AAAW).

This sequence belongs to the membrane-bound ascI terpene cyclase family.

It is found in the membrane. Its pathway is antifungal biosynthesis. Functionally, cyclase; part of the gene cluster that mediates the biosynthesis of the tetrahydropyranyl antifungal agent lanomycin that acts as an inhibitor of CYP51 and blocks the ergosterol biosynthesis. The biosynthesis probably begins with the formation of an hexaketide, followed by methionine mediated alkylation of C-2 and C-6, and methylation of the reduced C-3 oxygen, pyran forming reductive ring closure, oxygenation of C-4, beta-keto reduction, enoyl reduction and dehydration of the remaining oxygens, and finally, acylation with glycine to complete the biosynthesis. This chain is Terpene cyclase, found in Pyrenophora dematioidea (Helminthosporium dematioideum).